The primary structure comprises 647 residues: ATP-dependent zinc metalloprotease FtsH (647 aa).

Positions 1-33 (MARKSDEDTNPMDKFMDRLRGSPGDGGPGRPDP) are disordered. The Cytoplasmic segment spans residues 1–39 (MARKSDEDTNPMDKFMDRLRGSPGDGGPGRPDPSQRKVH). The helical transmembrane segment at 40–60 (FSIWYFILALLLIVWMQTYMG) threads the bilayer. The Periplasmic portion of the chain corresponds to 61–134 (EQQSEKISYS…RFSGDVQNPW (74 aa)). The helical transmembrane segment at 135 to 155 (LGLITWWLLPFAIMIFFWSFL) threads the bilayer. Residues 156–647 (MRRMGGGPQG…DPVQVEGGAA (492 aa)) lie on the Cytoplasmic side of the membrane. An ATP-binding site is contributed by 227 to 234 (GAPGTGKT). Position 449 (His-449) interacts with Zn(2+). Glu-450 is an active-site residue. Zn(2+) is bound by residues His-453 and Asp-526.

This sequence in the central section; belongs to the AAA ATPase family. In the C-terminal section; belongs to the peptidase M41 family. Homohexamer. Requires Zn(2+) as cofactor.

It localises to the cell inner membrane. Its function is as follows. Acts as a processive, ATP-dependent zinc metallopeptidase for both cytoplasmic and membrane proteins. Plays a role in the quality control of integral membrane proteins. The chain is ATP-dependent zinc metalloprotease FtsH from Syntrophobacter fumaroxidans (strain DSM 10017 / MPOB).